Reading from the N-terminus, the 417-residue chain is NADH-quinone oxidoreductase subunit D (417 aa).

The protein belongs to the complex I 49 kDa subunit family. NDH-1 is composed of 14 different subunits. Subunits NuoB, C, D, E, F, and G constitute the peripheral sector of the complex.

Its subcellular location is the cell inner membrane. The catalysed reaction is a quinone + NADH + 5 H(+)(in) = a quinol + NAD(+) + 4 H(+)(out). NDH-1 shuttles electrons from NADH, via FMN and iron-sulfur (Fe-S) centers, to quinones in the respiratory chain. The immediate electron acceptor for the enzyme in this species is believed to be ubiquinone. Couples the redox reaction to proton translocation (for every two electrons transferred, four hydrogen ions are translocated across the cytoplasmic membrane), and thus conserves the redox energy in a proton gradient. This chain is NADH-quinone oxidoreductase subunit D, found in Francisella tularensis subsp. novicida (strain U112).